Consider the following 143-residue polypeptide: Transcription antitermination protein NusB (143 aa).

This sequence belongs to the NusB family.

Functionally, involved in transcription antitermination. Required for transcription of ribosomal RNA (rRNA) genes. Binds specifically to the boxA antiterminator sequence of the ribosomal RNA (rrn) operons. This is Transcription antitermination protein NusB from Anaeromyxobacter sp. (strain Fw109-5).